Here is a 110-residue protein sequence, read N- to C-terminus: Small ribosomal subunit protein bS18 (110 aa).

The segment covering Met1–Gly18 has biased composition (low complexity). The segment at Met1–Arg41 is disordered. Basic residues predominate over residues Pro32–Arg41.

The protein belongs to the bacterial ribosomal protein bS18 family. As to quaternary structure, part of the 30S ribosomal subunit. Forms a tight heterodimer with protein bS6.

Binds as a heterodimer with protein bS6 to the central domain of the 16S rRNA, where it helps stabilize the platform of the 30S subunit. This Trichlorobacter lovleyi (strain ATCC BAA-1151 / DSM 17278 / SZ) (Geobacter lovleyi) protein is Small ribosomal subunit protein bS18.